The primary structure comprises 542 residues: Doublesex- and mab-3-related transcription factor A2 (542 aa).

Residues 70 to 117 (CARCRNHGVVSALKGHKRYCRWKDCLCAKCTLIAERQRVMAAQVALRR) constitute a DNA-binding region (DM). Positions 201-316 (LQAGRPGSPL…GGSGPRQRTP (116 aa)) are disordered. Residues 314–349 (RTPLDILTRVFPGHRRGVLELVLQGCGGDVVQAIEQ) enclose the DMA domain.

It belongs to the DMRT family. Expressed in testis.

The protein localises to the nucleus. Functionally, may be involved in sexual development. The sequence is that of Doublesex- and mab-3-related transcription factor A2 (DMRTA2) from Homo sapiens (Human).